The chain runs to 316 residues: Cobalamin biosynthesis protein CobD (316 aa).

Helical transmembrane passes span Phe45 to Val65, Pro78 to Phe100, Asp151 to Tyr171, Leu209 to Leu229, and Ile291 to Val311.

Belongs to the CobD/CbiB family.

Its subcellular location is the cell membrane. It functions in the pathway cofactor biosynthesis; adenosylcobalamin biosynthesis. Converts cobyric acid to cobinamide by the addition of aminopropanol on the F carboxylic group. This is Cobalamin biosynthesis protein CobD from Streptococcus sanguinis (strain SK36).